We begin with the raw amino-acid sequence, 57 residues long: UPF0391 membrane protein XOO1885 (57 aa).

2 helical membrane-spanning segments follow: residues 4–24 (WAIIFAIIGLIAGALGFGGMA) and 33–53 (FLFWAGIIIAIVLFVLGMTIA).

It belongs to the UPF0391 family.

It is found in the cell membrane. This is UPF0391 membrane protein XOO1885 from Xanthomonas oryzae pv. oryzae (strain KACC10331 / KXO85).